Reading from the N-terminus, the 248-residue chain is Small ribosomal subunit protein eS1 (248 aa).

A disordered region spans residues 1-21 (MAVGKDKRISKGKKGGKKKIV).

The protein belongs to the eukaryotic ribosomal protein eS1 family. In terms of assembly, component of the small ribosomal subunit. Mature ribosomes consist of a small (40S) and a large (60S) subunit. The 40S subunit contains about 33 different proteins and 1 molecule of RNA (18S). The 60S subunit contains about 49 different proteins and 3 molecules of RNA (25S, 5.8S and 5S).

Its subcellular location is the cytoplasm. The protein is Small ribosomal subunit protein eS1 of Syntrichia ruralis (Great hairy screw-moss).